The sequence spans 201 residues: Chromophore lyase CpcT/CpeT (201 aa).

The protein belongs to the CpcT/CpeT biliprotein lyase family.

The protein localises to the plastid. Its subcellular location is the organellar chromatophore. Functionally, covalently attaches a chromophore to Cys residue(s) of phycobiliproteins. This is Chromophore lyase CpcT/CpeT from Paulinella chromatophora.